The following is a 130-amino-acid chain: Large ribosomal subunit protein bL12 (130 aa).

It belongs to the bacterial ribosomal protein bL12 family. Homodimer. Part of the ribosomal stalk of the 50S ribosomal subunit. Forms a multimeric L10(L12)X complex, where L10 forms an elongated spine to which 2 to 4 L12 dimers bind in a sequential fashion. Binds GTP-bound translation factors.

In terms of biological role, forms part of the ribosomal stalk which helps the ribosome interact with GTP-bound translation factors. Is thus essential for accurate translation. The protein is Large ribosomal subunit protein bL12 of Mycolicibacterium vanbaalenii (strain DSM 7251 / JCM 13017 / BCRC 16820 / KCTC 9966 / NRRL B-24157 / PYR-1) (Mycobacterium vanbaalenii).